Here is a 340-residue protein sequence, read N- to C-terminus: Protein-arginine kinase (340 aa).

The Phosphagen kinase C-terminal domain occupies 21 to 242 (VVLSSRIRLA…EQIIMQERVA (222 aa)). Residues 24-28 (SSRIR), His79, Arg113, 164-168 (RASVM), and 195-200 (RGIYGE) each bind ATP.

It belongs to the ATP:guanido phosphotransferase family.

It catalyses the reaction L-arginyl-[protein] + ATP = N(omega)-phospho-L-arginyl-[protein] + ADP + H(+). Catalyzes the specific phosphorylation of arginine residues in proteins. This chain is Protein-arginine kinase, found in Listeria innocua serovar 6a (strain ATCC BAA-680 / CLIP 11262).